We begin with the raw amino-acid sequence, 276 residues long: Elongation factor Ts, mitochondrial (276 aa).

It belongs to the EF-Ts family.

Its subcellular location is the mitochondrion. In terms of biological role, associates with the EF-Tu.GDP complex and induces the exchange of GDP to GTP. It remains bound to the aminoacyl-tRNA.EF-Tu.GTP complex up to the GTP hydrolysis stage on the ribosome. The protein is Elongation factor Ts, mitochondrial of Leishmania major.